The sequence spans 142 residues: Phosphoribosyl-AMP cyclohydrolase (142 aa).

Asp-92 serves as a coordination point for Mg(2+). Cys-93 lines the Zn(2+) pocket. Residues Asp-94 and Asp-96 each contribute to the Mg(2+) site. 2 residues coordinate Zn(2+): Cys-109 and Cys-116.

The protein belongs to the PRA-CH family. In terms of assembly, homodimer. Mg(2+) serves as cofactor. It depends on Zn(2+) as a cofactor.

The protein resides in the cytoplasm. It carries out the reaction 1-(5-phospho-beta-D-ribosyl)-5'-AMP + H2O = 1-(5-phospho-beta-D-ribosyl)-5-[(5-phospho-beta-D-ribosylamino)methylideneamino]imidazole-4-carboxamide. It functions in the pathway amino-acid biosynthesis; L-histidine biosynthesis; L-histidine from 5-phospho-alpha-D-ribose 1-diphosphate: step 3/9. Functionally, catalyzes the hydrolysis of the adenine ring of phosphoribosyl-AMP. The polypeptide is Phosphoribosyl-AMP cyclohydrolase (Alcanivorax borkumensis (strain ATCC 700651 / DSM 11573 / NCIMB 13689 / SK2)).